We begin with the raw amino-acid sequence, 183 residues long: Ribosome-recycling factor (183 aa).

Belongs to the RRF family.

The protein resides in the cytoplasm. In terms of biological role, responsible for the release of ribosomes from messenger RNA at the termination of protein biosynthesis. May increase the efficiency of translation by recycling ribosomes from one round of translation to another. The protein is Ribosome-recycling factor of Acetivibrio thermocellus (strain ATCC 27405 / DSM 1237 / JCM 9322 / NBRC 103400 / NCIMB 10682 / NRRL B-4536 / VPI 7372) (Clostridium thermocellum).